The sequence spans 338 residues: Serpentine receptor class alpha-32 (338 aa).

Transmembrane regions (helical) follow at residues 30–50, 63–83, 120–140, 152–172, 199–219, 249–269, and 289–309; these read VYVIYIDLVLILALFLSIHAI, ITHLLIASLVYGNVHNASYTI, RFLFIAIELALNVDRIIVILF, GEILNILAVILSFALGCLLHL, LTSYTILSACCAALDFLMMWY, LNSLLQLFVTSIYAISMFVLA, and TTPYSTLLVPIQIKVFIQWIG.

Belongs to the nematode receptor-like protein sra family.

The protein localises to the membrane. This is Serpentine receptor class alpha-32 (sra-32) from Caenorhabditis elegans.